Here is a 193-residue protein sequence, read N- to C-terminus: ATP-dependent Clp protease proteolytic subunit (193 aa).

Catalysis depends on serine 98, which acts as the Nucleophile. Residue histidine 123 is part of the active site.

Belongs to the peptidase S14 family. As to quaternary structure, fourteen ClpP subunits assemble into 2 heptameric rings which stack back to back to give a disk-like structure with a central cavity, resembling the structure of eukaryotic proteasomes.

The protein resides in the cytoplasm. It catalyses the reaction Hydrolysis of proteins to small peptides in the presence of ATP and magnesium. alpha-casein is the usual test substrate. In the absence of ATP, only oligopeptides shorter than five residues are hydrolyzed (such as succinyl-Leu-Tyr-|-NHMec, and Leu-Tyr-Leu-|-Tyr-Trp, in which cleavage of the -Tyr-|-Leu- and -Tyr-|-Trp bonds also occurs).. Functionally, cleaves peptides in various proteins in a process that requires ATP hydrolysis. Has a chymotrypsin-like activity. Plays a major role in the degradation of misfolded proteins. The polypeptide is ATP-dependent Clp protease proteolytic subunit (Pasteurella multocida (strain Pm70)).